We begin with the raw amino-acid sequence, 286 residues long: MSLILPLEKPALNLRPLLWLLLPLLVLATLFFWPLSLIVEQALRGANGEIGLETFRHVVDSKRFVGALLNTLQIAFFATAGCLLLGSAMSLILVFIPFPGSELIGRVVDTFIALPTFLITLAFTFIYGSAGLLNGTLMSLFAFELPPVDFLYSMQGVILAEITVFTPLVMRPLMAALRQIDKSQLEAASILGAHPLRVIGQVIFPAALPALMAGGSLCLLLTTNEFGIVLFIGAKGVNTLPMMVYSKAILESDYTVACMIALINIVLSLGLFSLYRLAASRTGVRS.

6 helical membrane-spanning segments follow: residues 19–39, 76–96, 111–131, 150–170, 202–222, and 254–274; these read WLLLPLLVLATLFFWPLSLIV, FFATAGCLLLGSAMSLILVFI, FIALPTFLITLAFTFIYGSAG, FLYSMQGVILAEITVFTPLVM, VIFPAALPALMAGGSLCLLLT, and YTVACMIALINIVLSLGLFSL. An ABC transmembrane type-1 domain is found at 68 to 275; that stretch reads LLNTLQIAFF…VLSLGLFSLY (208 aa).

It belongs to the binding-protein-dependent transport system permease family.

Its subcellular location is the cell inner membrane. Its function is as follows. Probably part of the PhnSTUV complex (TC 3.A.1.11.5) involved in 2-aminoethylphosphonate import. Probably responsible for the translocation of the substrate across the membrane. The polypeptide is Putative 2-aminoethylphosphonate transport system permease protein PhnU (phnU) (Salmonella choleraesuis (strain SC-B67)).